A 197-amino-acid chain; its full sequence is C-type lectin domain family 3 member A (197 aa).

The first 22 residues, 1–22 (MAKNGLVICILVITLLLDQTTS), serve as a signal peptide directing secretion. Disulfide bonds link cysteine 68/cysteine 78, cysteine 95/cysteine 191, and cysteine 167/cysteine 183. The C-type lectin domain occupies 74–192 (VHKKCYLASE…CRSSKRYICE (119 aa)).

Restricted to cartilage and breast. Also expressed in breast cancers.

It localises to the secreted. Its function is as follows. Promotes cell adhesion to laminin-332 and fibronectin. This is C-type lectin domain family 3 member A (CLEC3A) from Homo sapiens (Human).